We begin with the raw amino-acid sequence, 49 residues long: Osteocalcin (49 aa).

One can recognise a Gla domain in the interval 1 to 47; it reads YLYQWLGAPAPYPDPLEPKREVCELNPDCDELADHIGFQEAYRRFYG. Position 9 is a 4-hydroxyproline (proline 9). Ca(2+)-binding residues include glutamate 17, glutamate 21, glutamate 24, and aspartate 30. 4-carboxyglutamate occurs at positions 17, 21, and 24. Cysteine 23 and cysteine 29 are joined by a disulfide.

It belongs to the osteocalcin/matrix Gla protein family. Post-translationally, gamma-carboxyglutamate residues are formed by vitamin K dependent carboxylation by GGCX. These residues are essential for the binding of calcium. Decarboxylation promotes the hormone activity.

Its subcellular location is the secreted. Functionally, the carboxylated form is one of the main organic components of the bone matrix, which constitutes 1-2% of the total bone protein: it acts as a negative regulator of bone formation and is required to limit bone formation without impairing bone resorption or mineralization. The carboxylated form binds strongly to apatite and calcium. Its function is as follows. The uncarboxylated form acts as a hormone secreted by osteoblasts, which regulates different cellular processes, such as energy metabolism, male fertility and brain development. Regulates of energy metabolism by acting as a hormone favoring pancreatic beta-cell proliferation, insulin secretion and sensitivity and energy expenditure. Uncarboxylated osteocalcin hormone also promotes testosterone production in the testes: acts as a ligand for G protein-coupled receptor GPRC6A at the surface of Leydig cells, initiating a signaling response that promotes the expression of enzymes required for testosterone synthesis in a CREB-dependent manner. Also acts as a regulator of brain development: osteocalcin hormone crosses the blood-brain barrier and acts as a ligand for GPR158 on neurons, initiating a signaling response that prevents neuronal apoptosis in the hippocampus, favors the synthesis of all monoamine neurotransmitters and inhibits that of gamma-aminobutyric acid (GABA). Osteocalcin also crosses the placenta during pregnancy and maternal osteocalcin is required for fetal brain development. The polypeptide is Osteocalcin (BGLAP) (Macaca fascicularis (Crab-eating macaque)).